Consider the following 249-residue polypeptide: Proteasome subunit alpha type-4 (249 aa).

Belongs to the peptidase T1A family. As to quaternary structure, the 26S proteasome consists of a 20S proteasome core and two 19S regulatory subunits. The 20S proteasome core is composed of 28 subunits that are arranged in four stacked rings, resulting in a barrel-shaped structure. The two end rings are each formed by seven alpha subunits, and the two central rings are each formed by seven beta subunits. The catalytic chamber with the active sites is on the inside of the barrel.

Its subcellular location is the cytoplasm. It localises to the nucleus. In terms of biological role, the proteasome is a multicatalytic proteinase complex which is characterized by its ability to cleave peptides with Arg, Phe, Tyr, Leu, and Glu adjacent to the leaving group at neutral or slightly basic pH. The proteasome has an ATP-dependent proteolytic activity. This is Proteasome subunit alpha type-4 (PAC1) from Petunia hybrida (Petunia).